A 376-amino-acid polypeptide reads, in one-letter code: Succinyl-diaminopimelate desuccinylase (376 aa).

His67 provides a ligand contact to Zn(2+). Asp69 is a catalytic residue. Asp100 provides a ligand contact to Zn(2+). The active-site Proton acceptor is Glu134. Zn(2+) contacts are provided by Glu135, Glu163, and His349.

It belongs to the peptidase M20A family. DapE subfamily. In terms of assembly, homodimer. Zn(2+) serves as cofactor. Co(2+) is required as a cofactor.

It carries out the reaction N-succinyl-(2S,6S)-2,6-diaminopimelate + H2O = (2S,6S)-2,6-diaminopimelate + succinate. The protein operates within amino-acid biosynthesis; L-lysine biosynthesis via DAP pathway; LL-2,6-diaminopimelate from (S)-tetrahydrodipicolinate (succinylase route): step 3/3. Catalyzes the hydrolysis of N-succinyl-L,L-diaminopimelic acid (SDAP), forming succinate and LL-2,6-diaminopimelate (DAP), an intermediate involved in the bacterial biosynthesis of lysine and meso-diaminopimelic acid, an essential component of bacterial cell walls. This chain is Succinyl-diaminopimelate desuccinylase, found in Proteus mirabilis (strain HI4320).